We begin with the raw amino-acid sequence, 593 residues long: Aspartate--tRNA(Asp/Asn) ligase (593 aa).

Residue glutamate 182 coordinates L-aspartate. The segment at 206-209 (QLFK) is aspartate. Arginine 228 contributes to the L-aspartate binding site. Residues 228-230 (RDE) and glutamine 237 each bind ATP. Histidine 455 contacts L-aspartate. Residue glutamate 489 coordinates ATP. Residue arginine 496 participates in L-aspartate binding. 541 to 544 (GLDR) is a binding site for ATP.

This sequence belongs to the class-II aminoacyl-tRNA synthetase family. Type 1 subfamily. In terms of assembly, homodimer.

Its subcellular location is the cytoplasm. The enzyme catalyses tRNA(Asx) + L-aspartate + ATP = L-aspartyl-tRNA(Asx) + AMP + diphosphate. Functionally, aspartyl-tRNA synthetase with relaxed tRNA specificity since it is able to aspartylate not only its cognate tRNA(Asp) but also tRNA(Asn). Reaction proceeds in two steps: L-aspartate is first activated by ATP to form Asp-AMP and then transferred to the acceptor end of tRNA(Asp/Asn). The protein is Aspartate--tRNA(Asp/Asn) ligase of Geotalea uraniireducens (strain Rf4) (Geobacter uraniireducens).